Reading from the N-terminus, the 610-residue chain is Fimbrin (610 aa).

EF-hand domains lie at 7 to 42 and 43 to 78; these read SEIS…CGEK and VTGV…ARQH. 10 residues coordinate Ca(2+): Asp20, Asn22, Asp24, Gln26, Glu31, Asp56, Asp58, Asn60, Ser62, and Glu67. Actin-binding regions lie at residues 102-365 and 366-608; these read YSGS…NTHP and ALEP…QVEM. 4 consecutive Calponin-homology (CH) domains span residues 116-232, 260-365, 379-488, and 501-608; these read DEEK…KIGL, LPVE…NTHP, TREE…RGHV, and PIAD…QVEM.

Its function is as follows. Binds to actin. This chain is Fimbrin (fimA), found in Dictyostelium discoideum (Social amoeba).